The primary structure comprises 179 residues: Transcription factor 21 (179 aa).

A disordered region spans residues 19–88; it reads DCDSLKVDSN…VQRNAANARE (70 aa). Polar residues-rich tracts occupy residues 30–49 and 70–80; these read EFGT…NGSP and SGVSQEGKQVQ. Positions 79–131 constitute a bHLH domain; the sequence is VQRNAANARERARMRVLSKAFSRLKTTLPWVPPDTKLSKLDTLRLASSYIAHL.

As to quaternary structure, efficient DNA binding requires dimerization with another bHLH protein. Forms a heterodimer with TCF3 and binds the E box (5'-CANNTG-3'). Expressed at high levels in lung, kidney, gut, heart, ovary and podocytes (visceral glomerular epithelial cells). Also found in spleen, large intestine, uterus, bladder and testis.

It is found in the nucleus. Involved in epithelial-mesenchymal interactions in kidney and lung morphogenesis that include epithelial differentiation and branching morphogenesis. May be involved in the organogenesis of the spleen and heart and in cardiac and coronary artery development. May function in the development and sex differentiation of gonad via transcriptional regulation of AD4BP/SF-1. The protein is Transcription factor 21 (Tcf21) of Mus musculus (Mouse).